Reading from the N-terminus, the 528-residue chain is Probable protein phosphatase 2C 51 (528 aa).

The helical transmembrane segment at 8–28 (SLLNLGLLIIFFVFFFLVINC) threads the bilayer. The PPM-type phosphatase domain maps to 71 to 445 (RCHTAAIQGR…DNMAAVVVPL (375 aa)). D117, G118, D385, and D436 together coordinate Mn(2+).

It belongs to the PP2C family. Mg(2+) is required as a cofactor. The cofactor is Mn(2+).

It localises to the membrane. It carries out the reaction O-phospho-L-seryl-[protein] + H2O = L-seryl-[protein] + phosphate. It catalyses the reaction O-phospho-L-threonyl-[protein] + H2O = L-threonyl-[protein] + phosphate. In Arabidopsis thaliana (Mouse-ear cress), this protein is Probable protein phosphatase 2C 51.